Consider the following 176-residue polypeptide: Dual-action ribosomal maturation protein DarP (176 aa).

The span at 1–10 shows a compositional bias: polar residues; sequence MTVPNHQQDI. The disordered stretch occupies residues 1–22; sequence MTVPNHQQDISDSDLESRPSKT.

Belongs to the DarP family.

It localises to the cytoplasm. Member of a network of 50S ribosomal subunit biogenesis factors which assembles along the 30S-50S interface, preventing incorrect 23S rRNA structures from forming. Promotes peptidyl transferase center (PTC) maturation. The sequence is that of Dual-action ribosomal maturation protein DarP from Nitrosomonas eutropha (strain DSM 101675 / C91 / Nm57).